Consider the following 425-residue polypeptide: Putative chloroquine resistance transporter (425 aa).

Residues 1–56 (MTGIKKGKNKKKNMKNDDRYKELDSLITNGSEIGNNSGRSCVKRFFKIIGNEMKNN) lie on the Cytoplasmic side of the membrane. The helical transmembrane segment at 57–77 (VYVYLLSILYLCVCVMNKVFA) threads the bilayer. Residues 78 to 88 (KRTLNKMGNYS) are Vacuolar-facing. Residue asparagine 86 is glycosylated (N-linked (GlcNAc...) asparagine). A helical transmembrane segment spans residues 89 to 109 (FVTSETHNIICIIVFQLLYFI). Residues 110 to 126 (YRKTSSSSVYKNESQKN) lie on the Cytoplasmic side of the membrane. The chain crosses the membrane as a helical span at residues 127-147 (FGWQFFLISLLDASTVIISMI). At 148 to 157 (GLTRTTGNIQ) the chain is on the vacuolar side. The helical transmembrane segment at 158–178 (SFIMQLIIPVNMYFWFMFLGY) threads the bilayer. The Cytoplasmic segment spans residues 179 to 181 (RYH). A helical membrane pass occupies residues 182–202 (LFNYLGAFIILITIAVVETFL). The Vacuolar portion of the chain corresponds to 203 to 210 (SFETQGEN). A helical membrane pass occupies residues 211–231 (SIIFNLIMISAFNTLSFSNMT). Residues 232–249 (REVVFKKHKINILRLNAM) lie on the Cytoplasmic side of the membrane. The helical transmembrane segment at 250–270 (VVLFQFFTSLLVLPVYNIPFL) threads the bilayer. Over 271-318 (KEIYMPFSEMSTNINNGLRCLFYGENTIVENCGVGMVKMCDNCEGAWK) the chain is Vacuolar. 2 disulfide bridges follow: cysteine 290/cysteine 313 and cysteine 302/cysteine 310. Residues 319–339 (TFITFSFFNICDNLLACYIID) form a helical membrane-spanning segment. Topologically, residues 340-347 (KFSTMTYT) are cytoplasmic. The chain crosses the membrane as a helical span at residues 348 to 368 (IVSCIQGPAITIAYYFKFLAG). Over 369-378 (DAVRKPRILD) the chain is Vacuolar. The helical transmembrane segment at 379–399 (FLTLFGYLFGTIIYRIGNIIL) threads the bilayer. Residues 400 to 425 (EKKQVIKSQNSNDSEAELTSIETSRA) are Cytoplasmic-facing.

The protein belongs to the CRT-like transporter family.

Its subcellular location is the vacuole membrane. Nutrient transporter. Involved in maintaining the osmotic homeostasis of the digestive vacuole. The chain is Putative chloroquine resistance transporter from Plasmodium berghei.